A 179-amino-acid polypeptide reads, in one-letter code: Large ribosomal subunit protein uL5 (179 aa).

This sequence belongs to the universal ribosomal protein uL5 family. In terms of assembly, part of the 50S ribosomal subunit; part of the 5S rRNA/L5/L18/L25 subcomplex. Contacts the 5S rRNA and the P site tRNA. Forms a bridge to the 30S subunit in the 70S ribosome.

In terms of biological role, this is one of the proteins that bind and probably mediate the attachment of the 5S RNA into the large ribosomal subunit, where it forms part of the central protuberance. In the 70S ribosome it contacts protein S13 of the 30S subunit (bridge B1b), connecting the 2 subunits; this bridge is implicated in subunit movement. Contacts the P site tRNA; the 5S rRNA and some of its associated proteins might help stabilize positioning of ribosome-bound tRNAs. The protein is Large ribosomal subunit protein uL5 of Clostridium novyi (strain NT).